The chain runs to 61 residues: Large ribosomal subunit protein uL30 (61 aa).

This sequence belongs to the universal ribosomal protein uL30 family. As to quaternary structure, part of the 50S ribosomal subunit.

This chain is Large ribosomal subunit protein uL30, found in Rubrobacter xylanophilus (strain DSM 9941 / JCM 11954 / NBRC 16129 / PRD-1).